A 381-amino-acid chain; its full sequence is Neuropeptide Y receptor type 2 (381 aa).

The interval 1 to 37 (MGPIGTEADENQTVEEIKVEPYGPGHTTPRGELAPDP) is disordered. Over 1–52 (MGPIGTEADENQTVEEIKVEPYGPGHTTPRGELAPDPEPELIDSTKLTEVRV) the chain is Extracellular. N-linked (GlcNAc...) asparagine glycosylation occurs at Asn-11. Residues 53-73 (VLILAYCSIILLGVVGNSLVI) form a helical membrane-spanning segment. At 74–87 (HVVIKFKSMRTVTN) the chain is on the cytoplasmic side. Residues 88 to 108 (FFIANLAVADLLVNTLCLPFT) form a helical membrane-spanning segment. The Extracellular segment spans residues 109 to 125 (LTYTLMGEWKMGPVLCH). A disulfide bridge links Cys-124 with Cys-204. Residues 126-146 (LVPYAQGLAVQVSTVTLTVIA) traverse the membrane as a helical segment. The Cytoplasmic segment spans residues 147–166 (LDRHRCIVYHLDSKISKQNS). Residues 167–187 (FLIIGLAWGISALLASPLAIF) form a helical membrane-spanning segment. Topologically, residues 188–217 (REYSLIEIIPDFEIVACTEKWPGEEKSIYG) are extracellular. Residues 218 to 238 (TVYSLSSLLILYVLPLGIISV) traverse the membrane as a helical segment. At 239–269 (SYVRIWSKLKNHVSPGAANDHYHQRRQKTTK) the chain is on the cytoplasmic side. A helical transmembrane segment spans residues 270 to 290 (MLVFVVVVFAVSWLPLHAFQL). Topologically, residues 291–305 (AVDIDSQVLDLKEYK) are extracellular. A helical transmembrane segment spans residues 306-326 (LIFTVFHIIAMCSTFANPLLY). At 327–381 (GWMNSNYRKAFLSAFRCQQRLDAIQSEVCVTGKAKTNVEVEKNHGAADSAEATNV) the chain is on the cytoplasmic side. A lipid anchor (S-palmitoyl cysteine) is attached at Cys-343.

The protein belongs to the G-protein coupled receptor 1 family.

It localises to the cell membrane. In terms of biological role, receptor for neuropeptide Y and peptide YY. The protein is Neuropeptide Y receptor type 2 (NPY2R) of Cavia porcellus (Guinea pig).